The sequence spans 300 residues: Bifunctional protein FolD (300 aa).

Residues 168–170 (GRS), Ser-193, and Ile-234 each bind NADP(+).

This sequence belongs to the tetrahydrofolate dehydrogenase/cyclohydrolase family. As to quaternary structure, homodimer.

The catalysed reaction is (6R)-5,10-methylene-5,6,7,8-tetrahydrofolate + NADP(+) = (6R)-5,10-methenyltetrahydrofolate + NADPH. It catalyses the reaction (6R)-5,10-methenyltetrahydrofolate + H2O = (6R)-10-formyltetrahydrofolate + H(+). The protein operates within one-carbon metabolism; tetrahydrofolate interconversion. In terms of biological role, catalyzes the oxidation of 5,10-methylenetetrahydrofolate to 5,10-methenyltetrahydrofolate and then the hydrolysis of 5,10-methenyltetrahydrofolate to 10-formyltetrahydrofolate. The polypeptide is Bifunctional protein FolD (Ehrlichia canis (strain Jake)).